The chain runs to 466 residues: Ribulose bisphosphate carboxylase large chain (466 aa).

Lysine 5 carries the post-translational modification N6,N6,N6-trimethyllysine. Substrate contacts are provided by asparagine 114 and threonine 164. Lysine 166 serves as the catalytic Proton acceptor. Lysine 168 serves as a coordination point for substrate. Residues lysine 192, aspartate 194, and glutamate 195 each contribute to the Mg(2+) site. An N6-carboxylysine modification is found at lysine 192. Residue histidine 285 is the Proton acceptor of the active site. Substrate is bound by residues arginine 286, histidine 318, and serine 370.

Belongs to the RuBisCO large chain family. Type I subfamily. In terms of assembly, heterohexadecamer of 8 large chains and 8 small chains; disulfide-linked. The disulfide link is formed within the large subunit homodimers. Mg(2+) is required as a cofactor. In terms of processing, the disulfide bond which can form in the large chain dimeric partners within the hexadecamer appears to be associated with oxidative stress and protein turnover.

It localises to the plastid. The protein resides in the chloroplast. The catalysed reaction is 2 (2R)-3-phosphoglycerate + 2 H(+) = D-ribulose 1,5-bisphosphate + CO2 + H2O. It catalyses the reaction D-ribulose 1,5-bisphosphate + O2 = 2-phosphoglycolate + (2R)-3-phosphoglycerate + 2 H(+). In terms of biological role, ruBisCO catalyzes two reactions: the carboxylation of D-ribulose 1,5-bisphosphate, the primary event in carbon dioxide fixation, as well as the oxidative fragmentation of the pentose substrate in the photorespiration process. Both reactions occur simultaneously and in competition at the same active site. The sequence is that of Ribulose bisphosphate carboxylase large chain from Bixa orellana (Lipstick tree).